The primary structure comprises 322 residues: NADH-quinone oxidoreductase subunit H (322 aa).

A run of 8 helical transmembrane segments spans residues 12–32 (IGKA…MSFI), 79–99 (IFIL…AVVP), 111–131 (VGLL…LFAG), 151–171 (LSYE…TGSF), 183–203 (LWNV…GVAV), 234–254 (FFVG…TLFF), 262–282 (LPPF…FILL), and 301–321 (VCLP…LMNV).

It belongs to the complex I subunit 1 family. In terms of assembly, NDH-1 is composed of 13 different subunits. Subunits NuoA, H, J, K, L, M, N constitute the membrane sector of the complex.

The protein resides in the cell inner membrane. It catalyses the reaction a quinone + NADH + 5 H(+)(in) = a quinol + NAD(+) + 4 H(+)(out). Its function is as follows. NDH-1 shuttles electrons from NADH, via FMN and iron-sulfur (Fe-S) centers, to quinones in the respiratory chain. The immediate electron acceptor for the enzyme in this species is believed to be ubiquinone. Couples the redox reaction to proton translocation (for every two electrons transferred, four hydrogen ions are translocated across the cytoplasmic membrane), and thus conserves the redox energy in a proton gradient. This subunit may bind ubiquinone. This is NADH-quinone oxidoreductase subunit H from Shewanella oneidensis (strain ATCC 700550 / JCM 31522 / CIP 106686 / LMG 19005 / NCIMB 14063 / MR-1).